The primary structure comprises 311 residues: Aquaporin NIP3-1 (311 aa).

Residues 1–34 (MEMAAPNGGGAAGMSSPVNGASAPATPGTPAPLF) are disordered. The segment covering 20–34 (GASAPATPGTPAPLF) has biased composition (low complexity). Helical transmembrane passes span 85–105 (LGAEFVGTFILIFFATAAPIV) and 111–131 (GAISPFGNAACAGLAVTTIIL). The NPA 1 motif lies at 142-144 (NPS). The next 3 membrane-spanning stretches (helical) occupy residues 158–178 (LQVPAYVAVQVLGSICAGFAL), 202–222 (AFFTEFIITFNLLFVVTAVAT), and 226–246 (AVGELAGIAVGAAVTLNILIA). The NPA 2 signature appears at 255–257 (NPV). Residues 273 to 293 (WIYLIAPTLGAVAGAGVYTAV) form a helical membrane-spanning segment.

It belongs to the MIP/aquaporin (TC 1.A.8) family. NIP (TC 1.A.8.12) subfamily. In terms of tissue distribution, expressed in roots and leaves.

The protein resides in the membrane. Its function is as follows. Aquaporins facilitate the transport of water and small neutral solutes across cell membranes. The polypeptide is Aquaporin NIP3-1 (NIP3-1) (Oryza sativa subsp. japonica (Rice)).